Consider the following 669-residue polypeptide: CoB--CoM heterodisulfide reductase iron-sulfur subunit A 1 (669 aa).

Residue 153-176 (GGGIAGIQAALDLADQGFKVYLVE) coordinates FAD. A non-standard amino acid (selenocysteine) is located at residue U200. 4 4Fe-4S ferredoxin-type domains span residues 239-270 (KKPR…FDLG), 287-318 (LVYT…FDQE), 584-613 (ITAT…MVEK), and 617-646 (RVAE…LRYY). The [4Fe-4S] cluster site is built by C249, C252, C255, C259, C296, C299, C302, C306, C593, C596, C599, C603, C626, C629, C632, and C636.

The protein belongs to the HdrA family. As to quaternary structure, the ferredoxin:CoB-CoM heterodisulfide reductase is composed of three subunits; HdrA, HdrB and HdrC. [4Fe-4S] cluster serves as cofactor. The cofactor is FAD.

It functions in the pathway cofactor metabolism; coenzyme M-coenzyme B heterodisulfide reduction; coenzyme B and coenzyme M from coenzyme M-coenzyme B heterodisulfide: step 1/1. Functionally, part of a complex that catalyzes the reversible reduction of CoM-S-S-CoB to the thiol-coenzymes H-S-CoM (coenzyme M) and H-S-CoB (coenzyme B). The polypeptide is CoB--CoM heterodisulfide reductase iron-sulfur subunit A 1 (hdrA1) (Methanopyrus kandleri (strain AV19 / DSM 6324 / JCM 9639 / NBRC 100938)).